A 1170-amino-acid polypeptide reads, in one-letter code: Protein SCAR4 (1170 aa).

Disordered stretches follow at residues 180–207 (KLGK…EDSR), 356–376 (NDAD…SDDK), 631–674 (AAPK…PRDL), 701–742 (SYSG…NQTG), 783–819 (NQRQ…SSPL), 960–980 (EESK…SDTY), and 1026–1046 (HNNP…HPLE). Positions 183–195 (KDKRLRQSKKKGS) are enriched in basic residues. Basic and acidic residues predominate over residues 198-207 (TIKETPEDSR). Residues 356-365 (NDADSPASTE) are compositionally biased toward polar residues. Residues 366–376 (SEVKEAGSDDK) show a composition bias toward basic and acidic residues. Composition is skewed to polar residues over residues 640-668 (SQDG…TLMS), 701-716 (SYSG…IVSD), 783-818 (NQRQ…QSSP), and 967-980 (EQSP…SDTY). Residues 1105-1123 (ENDSLLEIIRSKSFNLRPA) form the WH2 domain.

The protein belongs to the SCAR/WAVE family. In terms of assembly, interacts with SPK1. As to expression, expressed in expanding cotyledons, expanding leaves and expanding siliques containing developing embryos. Detected in unopened flower buds and in the expanding tip region of roots. Reduced expression in mature leaves.

The protein resides in the cytoplasm. It is found in the cytoskeleton. Its function is as follows. Involved in regulation of actin and microtubule organization. Part of a WAVE complex that activates the Arp2/3 complex. Regulates trichome branch positioning and expansion. The chain is Protein SCAR4 (SCAR4) from Arabidopsis thaliana (Mouse-ear cress).